The following is a 503-amino-acid chain: Glycerol kinase (503 aa).

An ADP-binding site is contributed by Thr14. The ATP site is built by Thr14, Thr15, and Ser16. Thr14 serves as a coordination point for sn-glycerol 3-phosphate. Arg18 lines the ADP pocket. Sn-glycerol 3-phosphate-binding residues include Arg84, Glu85, Tyr136, and Asp246. Glycerol-binding residues include Arg84, Glu85, Tyr136, Asp246, and Gln247. Residues Thr268 and Gly311 each contribute to the ADP site. Residues Thr268, Gly311, Gln315, and Gly412 each contribute to the ATP site. 2 residues coordinate ADP: Gly412 and Asn416.

The protein belongs to the FGGY kinase family.

The catalysed reaction is glycerol + ATP = sn-glycerol 3-phosphate + ADP + H(+). Its pathway is polyol metabolism; glycerol degradation via glycerol kinase pathway; sn-glycerol 3-phosphate from glycerol: step 1/1. Its activity is regulated as follows. Inhibited by fructose 1,6-bisphosphate (FBP). Key enzyme in the regulation of glycerol uptake and metabolism. Catalyzes the phosphorylation of glycerol to yield sn-glycerol 3-phosphate. The sequence is that of Glycerol kinase from Haemophilus influenzae (strain PittGG).